The sequence spans 132 residues: uncharacterized protein (132 aa).

The tract at residues 17–75 (RSAVPRWPHLSSQSGVEPPDRWTGTPGWPSRDQEAPGSMMPPAAAQPSAHGALVPPATA) is disordered. The segment covering 51 to 65 (APGSMMPPAAAQPSA) has biased composition (low complexity).

Expressed exclusively in heart.

It is found in the cytoplasm. This is an uncharacterized protein from Homo sapiens (Human).